Consider the following 499-residue polypeptide: Glucose-6-phosphate isomerase (499 aa).

Glu352 acts as the Proton donor in catalysis. Residues His383 and Lys487 contribute to the active site.

Belongs to the GPI family.

The protein localises to the cytoplasm. The enzyme catalyses alpha-D-glucose 6-phosphate = beta-D-fructose 6-phosphate. Its pathway is carbohydrate biosynthesis; gluconeogenesis. It participates in carbohydrate degradation; glycolysis; D-glyceraldehyde 3-phosphate and glycerone phosphate from D-glucose: step 2/4. Functionally, catalyzes the reversible isomerization of glucose-6-phosphate to fructose-6-phosphate. The polypeptide is Glucose-6-phosphate isomerase (Legionella pneumophila (strain Lens)).